Reading from the N-terminus, the 535-residue chain is uncharacterized protein (535 aa).

A helical membrane pass occupies residues 8-24 (LVVFGSLVFFFGLVKYF). Lys-50 is covalently cross-linked (Glycyl lysine isopeptide (Lys-Gly) (interchain with G-Cter in ubiquitin)). 5 residues coordinate Mn(2+): Asp-316, Asp-327, His-412, Glu-452, and Glu-493.

This sequence belongs to the peptidase M24B family. The cofactor is Mn(2+).

It is found in the membrane. This is an uncharacterized protein from Saccharomyces cerevisiae (strain ATCC 204508 / S288c) (Baker's yeast).